The sequence spans 506 residues: Beta-glucosidase 9 (506 aa).

Positions Met1 to Ala22 are cleaved as a signal peptide. Residues Gln42, His139, and Asn184–Glu185 each bind a beta-D-glucoside. Glu185 serves as the catalytic Proton donor. A disulfide bridge links Cys204 with Cys212. N-linked (GlcNAc...) asparagine glycosylation is found at Asn211 and Asn216. Tyr328 serves as a coordination point for a beta-D-glucoside. Asn363 carries an N-linked (GlcNAc...) asparagine glycan. Glu396 serves as a coordination point for a beta-D-glucoside. Residue Glu396 is the Nucleophile of the active site. Asn429 is a glycosylation site (N-linked (GlcNAc...) asparagine). Residues Trp439 and Phe455 each contribute to the a beta-D-glucoside site. N-linked (GlcNAc...) asparagine glycans are attached at residues Asn461, Asn483, and Asn499.

Belongs to the glycosyl hydrolase 1 family.

It catalyses the reaction Hydrolysis of terminal, non-reducing beta-D-glucosyl residues with release of beta-D-glucose.. This is Beta-glucosidase 9 from Arabidopsis thaliana (Mouse-ear cress).